A 262-amino-acid chain; its full sequence is Beta-phosphoglucomutase (262 aa).

Asp-29 acts as the Nucleophile in catalysis. Mg(2+) is bound by residues Asp-29 and Asp-31. Position 29 is a 4-aspartylphosphate (Asp-29). The active-site Proton donor/acceptor is Asp-31. Positions 31, 79, 82, 157, and 159 each coordinate beta-D-glucose 6-phosphate. Asp-215 contacts Mg(2+).

This sequence belongs to the HAD-like hydrolase superfamily. CbbY/CbbZ/Gph/YieH family. As to quaternary structure, monomer. It depends on Mg(2+) as a cofactor. Autophosphorylated.

It carries out the reaction beta-D-glucose 1-phosphate = beta-D-glucose 6-phosphate. Its function is as follows. Catalyzes the interconversion of D-glucose 1-phosphate (G1P) and D-glucose 6-phosphate (G6P), forming beta-D-glucose 1,6-(bis)phosphate (beta-G16P) as an intermediate. This Mycobacterium bovis (strain ATCC BAA-935 / AF2122/97) protein is Beta-phosphoglucomutase.